The following is a 264-amino-acid chain: Ribosomal RNA small subunit methyltransferase J (264 aa).

Residues 111–112 (RD), 127–128 (ER), and Asp180 contribute to the S-adenosyl-L-methionine site.

Belongs to the methyltransferase superfamily. RsmJ family.

The protein localises to the cytoplasm. It catalyses the reaction guanosine(1516) in 16S rRNA + S-adenosyl-L-methionine = N(2)-methylguanosine(1516) in 16S rRNA + S-adenosyl-L-homocysteine + H(+). In terms of biological role, specifically methylates the guanosine in position 1516 of 16S rRNA. This chain is Ribosomal RNA small subunit methyltransferase J, found in Alkalilimnicola ehrlichii (strain ATCC BAA-1101 / DSM 17681 / MLHE-1).